Reading from the N-terminus, the 101-residue chain is Alkene monooxygenase system, effector subunit (101 aa).

Belongs to the TmoD/XamoD family. As to quaternary structure, monomer. The alkene monooxygenase multicomponent enzyme system is composed of an electron transfer component and a monooxygenase component interacting with the effector protein XamoD. The electron transfer component is composed of a ferredoxin reductase (XamoF) and a ferredoxin (XamoC), and the monooxygenase component is formed by a heterohexamer (dimer of heterotrimers) of two alpha subunits (XamoA), two beta subunits (XamoE) and two gamma subunits (XamoB).

It localises to the cytoplasm. Functionally, effector component of the alkene monooxygenase multicomponent enzyme system which catalyzes the O2- and NADH-dependent epoxidation of short chain (C2 to C6) alkenes to their corresponding epoxides. One possible role of this small protein might be to facilitate electron transfer between the reductase and ferredoxin components. The polypeptide is Alkene monooxygenase system, effector subunit (Xanthobacter autotrophicus (strain ATCC BAA-1158 / Py2)).